The primary structure comprises 926 residues: Storkhead-box protein 2 (926 aa).

Disordered regions lie at residues 1-32 (MKKT…RSEK), 338-393 (EEEK…DIPG), 452-529 (EMPF…SYID), 564-586 (KEPS…PSYG), 633-693 (VKKL…SLDK), 723-802 (LLKS…VGTM), and 823-926 (TLLT…VTSV). Positions 18-32 (FSDRASDRMRSRSEK) are enriched in basic and acidic residues. The span at 353–378 (HSGRSKKSRTHRKSHGKSRSHSKTRV) shows a compositional bias: basic residues. Over residues 379–393 (SKGDPSDGSHLDIPG) the composition is skewed to basic and acidic residues. Positions 463 to 472 (SHSKVHRSHS) are enriched in basic residues. The segment covering 473-495 (HTQDRRSRNERSNKAKERSRSMD) has biased composition (basic and acidic residues). Residues 518–529 (QDDQTPSQSYID) are compositionally biased toward polar residues. Basic and acidic residues-rich tracts occupy residues 633–658 (VKKL…EESP) and 684–693 (HSAEPSSLDK). A compositionally biased stretch (polar residues) spans 746–769 (LGTSAAQAMPPSQRQQEPGGNQEA). Over residues 785-799 (GANKNAEEEKNRDDV) the composition is skewed to basic and acidic residues. 2 stretches are compositionally biased toward polar residues: residues 847–884 (MDSS…QNPA) and 914–926 (KPSN…VTSV).

The protein is Storkhead-box protein 2 (Stox2) of Mus musculus (Mouse).